Reading from the N-terminus, the 262-residue chain is Ribosome-recycling factor, mitochondrial (262 aa).

The N-terminal 55 residues, 1–55 (MALGLKCFRMVHPTFRNYLAASIRPVSEVTLKTVHERQHGHRQYMAYSAVPVRHF), are a transit peptide targeting the mitochondrion.

It belongs to the RRF family.

It localises to the mitochondrion. Its function is as follows. Responsible for the disassembly of ribosomes from messenger RNA at the termination of mitochondrial protein biosynthesis. Acts in collaboration with GFM2. Promotes mitochondrial ribosome recycling by dissolution of intersubunit contacts. This Homo sapiens (Human) protein is Ribosome-recycling factor, mitochondrial.